The sequence spans 314 residues: GDP-L-fucose synthase (314 aa).

NADP(+) is bound by residues 15–21 (GHKGMVG) and 109–112 (LGSS). Catalysis depends on Tyr-140, which acts as the Proton donor/acceptor. NADP(+) contacts are provided by residues Lys-144, 167 to 170 (PTNL), and His-183. The substrate site is built by Lys-191, Trp-206, Arg-213, and Asp-273.

Belongs to the NAD(P)-dependent epimerase/dehydratase family. Fucose synthase subfamily.

The enzyme catalyses GDP-beta-L-fucose + NADP(+) = GDP-4-dehydro-alpha-D-rhamnose + NADPH + H(+). Its pathway is nucleotide-sugar biosynthesis; GDP-L-fucose biosynthesis via de novo pathway; GDP-L-fucose from GDP-alpha-D-mannose: step 2/2. In terms of biological role, catalyzes the two-step NADP-dependent conversion of GDP-4-dehydro-6-deoxy-D-mannose to GDP-fucose, involving an epimerase and a reductase reaction. The sequence is that of GDP-L-fucose synthase from Sinorhizobium fredii (strain NBRC 101917 / NGR234).